The following is a 116-amino-acid chain: Flagellar transcriptional regulator FlhD (116 aa).

This sequence belongs to the FlhD family. As to quaternary structure, homodimer; disulfide-linked. Forms a heterohexamer composed of two FlhC and four FlhD subunits. Each FlhC binds a FlhD dimer, forming a heterotrimer, and a hexamer assembles by dimerization of two heterotrimers.

The protein localises to the cytoplasm. Functions in complex with FlhC as a master transcriptional regulator that regulates transcription of several flagellar and non-flagellar operons by binding to their promoter region. Activates expression of class 2 flagellar genes, including fliA, which is a flagellum-specific sigma factor that turns on the class 3 genes. Also regulates genes whose products function in a variety of physiological pathways. In Pantoea ananatis (strain LMG 20103), this protein is Flagellar transcriptional regulator FlhD.